Here is a 375-residue protein sequence, read N- to C-terminus: uncharacterized protein (375 aa).

Lys-99 is covalently cross-linked (Isoglutamyl lysine isopeptide (Lys-Gln) (interchain with Q-Cter in protein Pup)).

This sequence belongs to the IMPDH/GMPR family.

This is an uncharacterized protein from Mycolicibacterium smegmatis (strain ATCC 700084 / mc(2)155) (Mycobacterium smegmatis).